A 236-amino-acid polypeptide reads, in one-letter code: UPF0280 protein Mlab_0453 (236 aa).

The protein belongs to the UPF0280 family.

This chain is UPF0280 protein Mlab_0453, found in Methanocorpusculum labreanum (strain ATCC 43576 / DSM 4855 / Z).